A 199-amino-acid chain; its full sequence is dTTP/UTP pyrophosphatase (199 aa).

Catalysis depends on Asp-79, which acts as the Proton acceptor.

The protein belongs to the Maf family. YhdE subfamily. A divalent metal cation serves as cofactor.

Its subcellular location is the cytoplasm. It catalyses the reaction dTTP + H2O = dTMP + diphosphate + H(+). The enzyme catalyses UTP + H2O = UMP + diphosphate + H(+). Nucleoside triphosphate pyrophosphatase that hydrolyzes dTTP and UTP. May have a dual role in cell division arrest and in preventing the incorporation of modified nucleotides into cellular nucleic acids. The polypeptide is dTTP/UTP pyrophosphatase (Porphyromonas gingivalis (strain ATCC 33277 / DSM 20709 / CIP 103683 / JCM 12257 / NCTC 11834 / 2561)).